We begin with the raw amino-acid sequence, 633 residues long: GTPase-activating protein GYP3 (633 aa).

Residues 26 to 127 form a disordered region; it reads AFTVKSPSVP…HSDDLDLVPD (102 aa). A compositionally biased stretch (basic and acidic residues) spans 37-47; sequence FHDKMHSDHSS. Positions 99 to 115 are enriched in acidic residues; sequence GEDDDDNNGDNGNEDLE. The residue at position 147 (S147) is a Phosphoserine. The Rab-GAP TBC domain occupies 223–456; sequence GIPAEWRGNA…RIWDCLFYEE (234 aa). S484 carries the phosphoserine modification.

The protein resides in the cytoplasm. Its subcellular location is the bud. It localises to the bud neck. Functionally, regulates exocytosis by functioning as a GAP for SEC4. Stimulates specifically the GTPase activity of YPT6. Also required for efficient polarization of the actin patches. This chain is GTPase-activating protein GYP3 (MSB3), found in Saccharomyces cerevisiae (strain ATCC 204508 / S288c) (Baker's yeast).